We begin with the raw amino-acid sequence, 333 residues long: Glycerol-3-phosphate dehydrogenase [NAD(P)+] (333 aa).

The NADPH site is built by Trp11, Arg30, and Lys105. Residues Lys105, Gly133, and Ser135 each contribute to the sn-glycerol 3-phosphate site. Position 137 (Ala137) interacts with NADPH. Residues Lys188, Asp241, Ser251, Arg252, and Asn253 each coordinate sn-glycerol 3-phosphate. The active-site Proton acceptor is the Lys188. Arg252 serves as a coordination point for NADPH. The NADPH site is built by Val276 and Glu278.

It belongs to the NAD-dependent glycerol-3-phosphate dehydrogenase family.

It is found in the cytoplasm. The catalysed reaction is sn-glycerol 3-phosphate + NAD(+) = dihydroxyacetone phosphate + NADH + H(+). It carries out the reaction sn-glycerol 3-phosphate + NADP(+) = dihydroxyacetone phosphate + NADPH + H(+). Its pathway is membrane lipid metabolism; glycerophospholipid metabolism. Functionally, catalyzes the reduction of the glycolytic intermediate dihydroxyacetone phosphate (DHAP) to sn-glycerol 3-phosphate (G3P), the key precursor for phospholipid synthesis. The sequence is that of Glycerol-3-phosphate dehydrogenase [NAD(P)+] from Methylibium petroleiphilum (strain ATCC BAA-1232 / LMG 22953 / PM1).